We begin with the raw amino-acid sequence, 139 residues long: Nucleoside diphosphate kinase (139 aa).

Residues Lys-10, Phe-58, Arg-86, Thr-92, Arg-103, and Asn-113 each contribute to the ATP site. His-116 serves as the catalytic Pros-phosphohistidine intermediate.

Belongs to the NDK family. As to quaternary structure, homotetramer. Requires Mg(2+) as cofactor.

It is found in the cytoplasm. It carries out the reaction a 2'-deoxyribonucleoside 5'-diphosphate + ATP = a 2'-deoxyribonucleoside 5'-triphosphate + ADP. The catalysed reaction is a ribonucleoside 5'-diphosphate + ATP = a ribonucleoside 5'-triphosphate + ADP. Major role in the synthesis of nucleoside triphosphates other than ATP. The ATP gamma phosphate is transferred to the NDP beta phosphate via a ping-pong mechanism, using a phosphorylated active-site intermediate. This chain is Nucleoside diphosphate kinase, found in Nitratidesulfovibrio vulgaris (strain DSM 19637 / Miyazaki F) (Desulfovibrio vulgaris).